Consider the following 318-residue polypeptide: Homoserine kinase (318 aa).

97-107 serves as a coordination point for ATP; sequence PIGSGLGSSAC.

The protein belongs to the GHMP kinase family. Homoserine kinase subfamily.

It localises to the cytoplasm. The enzyme catalyses L-homoserine + ATP = O-phospho-L-homoserine + ADP + H(+). It functions in the pathway amino-acid biosynthesis; L-threonine biosynthesis; L-threonine from L-aspartate: step 4/5. Catalyzes the ATP-dependent phosphorylation of L-homoserine to L-homoserine phosphate. In Vibrio parahaemolyticus serotype O3:K6 (strain RIMD 2210633), this protein is Homoserine kinase.